The sequence spans 301 residues: HPr kinase/phosphorylase (301 aa).

Residues His-134 and Lys-155 contribute to the active site. 149-156 (GKSGLGKS) contacts ATP. Ser-156 serves as a coordination point for Mg(2+). The Proton acceptor; for phosphorylation activity. Proton donor; for dephosphorylation activity role is filled by Asp-173. The interval 196-205 (LEVRGLGIIN) is important for the catalytic mechanism of both phosphorylation and dephosphorylation. Glu-197 contributes to the Mg(2+) binding site. Arg-239 is a catalytic residue. Residues 260–265 (PITPGK) are important for the catalytic mechanism of dephosphorylation.

This sequence belongs to the HPrK/P family. Homohexamer. The cofactor is Mg(2+).

The enzyme catalyses [HPr protein]-L-serine + ATP = [HPr protein]-O-phospho-L-serine + ADP + H(+). The catalysed reaction is [HPr protein]-O-phospho-L-serine + phosphate + H(+) = [HPr protein]-L-serine + diphosphate. Catalyzes the ATP- as well as the pyrophosphate-dependent phosphorylation of a specific serine residue in HPr, a phosphocarrier protein of the phosphoenolpyruvate-dependent sugar phosphotransferase system (PTS). HprK/P also catalyzes the pyrophosphate-producing, inorganic phosphate-dependent dephosphorylation (phosphorolysis) of seryl-phosphorylated HPr (P-Ser-HPr). The two antagonistic activities of HprK/P are regulated by several intracellular metabolites, which change their concentration in response to the absence or presence of rapidly metabolisable carbon sources (glucose, fructose, etc.) in the growth medium. Therefore, by controlling the phosphorylation state of HPr, HPrK/P is a sensor enzyme that plays a major role in the regulation of carbon metabolism and sugar transport: it mediates carbon catabolite repression (CCR), and regulates PTS-catalyzed carbohydrate uptake and inducer exclusion. The chain is HPr kinase/phosphorylase from Malacoplasma penetrans (strain HF-2) (Mycoplasma penetrans).